The primary structure comprises 404 residues: Argininosuccinate synthase (404 aa).

ATP-binding positions include 10–18 (AFSGGLDTS) and Ala37. The L-citrulline site is built by Tyr88 and Ser93. Residue Gly118 coordinates ATP. Thr120, Asn124, and Asp125 together coordinate L-aspartate. Asn124 contributes to the L-citrulline binding site. Arg128, Ser179, Ser188, Glu264, and Tyr276 together coordinate L-citrulline.

The protein belongs to the argininosuccinate synthase family. Type 1 subfamily. In terms of assembly, homotetramer.

The protein localises to the cytoplasm. The enzyme catalyses L-citrulline + L-aspartate + ATP = 2-(N(omega)-L-arginino)succinate + AMP + diphosphate + H(+). It participates in amino-acid biosynthesis; L-arginine biosynthesis; L-arginine from L-ornithine and carbamoyl phosphate: step 2/3. The chain is Argininosuccinate synthase from Nitrosomonas europaea (strain ATCC 19718 / CIP 103999 / KCTC 2705 / NBRC 14298).